The chain runs to 304 residues: Putative S-adenosyl-L-methionine-dependent methyltransferase MSMEG_1482/MSMEI_1446 (304 aa).

Residues D130 and 159-160 (DL) contribute to the S-adenosyl-L-methionine site.

It belongs to the UPF0677 family.

Its function is as follows. Exhibits S-adenosyl-L-methionine-dependent methyltransferase activity. The chain is Putative S-adenosyl-L-methionine-dependent methyltransferase MSMEG_1482/MSMEI_1446 from Mycolicibacterium smegmatis (strain ATCC 700084 / mc(2)155) (Mycobacterium smegmatis).